Consider the following 330-residue polypeptide: Glycerol-3-phosphate dehydrogenase [NAD(P)+] (330 aa).

Positions 13, 33, and 103 each coordinate NADPH. Positions 103, 131, and 133 each coordinate sn-glycerol 3-phosphate. A135 is an NADPH binding site. Positions 186, 239, 249, 250, and 251 each coordinate sn-glycerol 3-phosphate. Residue K186 is the Proton acceptor of the active site. R250 serves as a coordination point for NADPH. V274 and E276 together coordinate NADPH.

This sequence belongs to the NAD-dependent glycerol-3-phosphate dehydrogenase family.

It is found in the cytoplasm. It catalyses the reaction sn-glycerol 3-phosphate + NAD(+) = dihydroxyacetone phosphate + NADH + H(+). It carries out the reaction sn-glycerol 3-phosphate + NADP(+) = dihydroxyacetone phosphate + NADPH + H(+). It functions in the pathway membrane lipid metabolism; glycerophospholipid metabolism. In terms of biological role, catalyzes the reduction of the glycolytic intermediate dihydroxyacetone phosphate (DHAP) to sn-glycerol 3-phosphate (G3P), the key precursor for phospholipid synthesis. The sequence is that of Glycerol-3-phosphate dehydrogenase [NAD(P)+] from Erythrobacter litoralis (strain HTCC2594).